The following is a 320-amino-acid chain: Heptaprenyl diphosphate synthase component 2 (320 aa).

The isopentenyl diphosphate site is built by K45, R48, and H77. Mg(2+) contacts are provided by D84 and D88. R93 is a binding site for all-trans-hexaprenyl diphosphate. Isopentenyl diphosphate is bound at residue R94. Positions 170, 171, and 208 each coordinate all-trans-hexaprenyl diphosphate.

Belongs to the FPP/GGPP synthase family. Heterodimer of component I and II. Mg(2+) is required as a cofactor.

The catalysed reaction is 4 isopentenyl diphosphate + (2E,6E)-farnesyl diphosphate = all-trans-heptaprenyl diphosphate + 4 diphosphate. Its function is as follows. Supplies heptaprenyl diphosphate, the precursor for the side chain of the isoprenoid quinone menaquinone-7 (MQ-7). The protein is Heptaprenyl diphosphate synthase component 2 (hepT) of Geobacillus stearothermophilus (Bacillus stearothermophilus).